Reading from the N-terminus, the 697-residue chain is uncharacterized protein (697 aa).

Residues 516–545 (ADQSQNDVVALSSRIDRLTQEVVALQNSEK) are a coiled coil.

This is an uncharacterized protein from Callospermophilus lateralis (Golden-mantled ground squirrel).